The chain runs to 237 residues: Tetraspanin-8 (237 aa).

The Cytoplasmic segment spans residues 1-9 (MAGVSACIK). A helical membrane pass occupies residues 10–33 (YSMFTFNFLFWLCGILILALAIWV). The Extracellular portion of the chain corresponds to 34–57 (RVSNDSQAIFGSEDVGSSSYVAVD). A helical membrane pass occupies residues 58–72 (ILIAVGAIIMILGFL). Over 73 to 83 (GCCGAIKESRC) the chain is Cytoplasmic. The helical transmembrane segment at 84–109 (MLLLFFIGLLLILLLQVATGILGAVF) threads the bilayer. The Extracellular segment spans residues 110-205 (KSKSDRIVNE…SFIKDFLAKN (96 aa)). Asn118 is a glycosylation site (N-linked (GlcNAc...) asparagine). The helical transmembrane segment at 206–230 (LIIVIGISFGLAVIEILGLVFSMVL) threads the bilayer. The Cytoplasmic portion of the chain corresponds to 231–237 (YCQIGNK).

The protein belongs to the tetraspanin (TM4SF) family. In terms of assembly, forms homooligomers. Interacts with MEP1B. Interacts with integrin alpha3/ITGA3. Interacts with RICTOR and MTOR. Interacts with ADAM17. Interacts with ECE1. Gastric, colon, rectal, and pancreatic carcinomas.

It is found in the cell membrane. Structural component of specialized membrane microdomains known as tetraspanin-enriched microdomains (TERMs), which act as platforms for receptor clustering and signaling. Participates thereby in diverse biological functions such as cell signal transduction, migration and protein trafficking. Promotes ADAM17-mediated TNF-alpha processing through recruitment of ADAM17 to tetraspanin-enriched micro-domains (TEMs). Forms a complex with RICTOR and integrin alpha3/ITGA3 to mediate mTORC2 activation and AKT1 phosphorylation leading to cell migration. Reduces apoptosis and autophagy induced by high glucose levels through forming a complex with mTOR and RICTOR. Contributes to the maintenance of intestinal epithelial barrier and plays a role in the regulation of intestine inflammation by switching interferon gamma receptor 1/IFNGR1 from clathrin-dependent to lipid raft-dependent endocytosis route to limit STAT1 activation magnitude and duration. Acts as a modulator of the endothelin axis by associating with endothelin converting enzyme ECE1 and regulating its activity of conversion of the endothelin-1 precursor to endothelin. The chain is Tetraspanin-8 (TSPAN8) from Homo sapiens (Human).